Consider the following 366-residue polypeptide: Peptide chain release factor 1 (366 aa).

An N5-methylglutamine modification is found at Gln239.

This sequence belongs to the prokaryotic/mitochondrial release factor family. Post-translationally, methylated by PrmC. Methylation increases the termination efficiency of RF1.

The protein localises to the cytoplasm. Functionally, peptide chain release factor 1 directs the termination of translation in response to the peptide chain termination codons UAG and UAA. This chain is Peptide chain release factor 1, found in Baumannia cicadellinicola subsp. Homalodisca coagulata.